A 93-amino-acid polypeptide reads, in one-letter code: UPF0473 protein CHY_0543 (93 aa).

It belongs to the UPF0473 family.

The protein is UPF0473 protein CHY_0543 of Carboxydothermus hydrogenoformans (strain ATCC BAA-161 / DSM 6008 / Z-2901).